Here is a 791-residue protein sequence, read N- to C-terminus: Ataxin-1 (791 aa).

Residues 1-30 (MKSNQERSNECLPPKKREIPATSRPSEEKA) are compositionally biased toward basic and acidic residues. The interval 1–36 (MKSNQERSNECLPPKKREIPATSRPSEEKATALPSD) is disordered. Residue lysine 16 forms a Glycyl lysine isopeptide (Lys-Gly) (interchain with G-Cter in SUMO) linkage. Serine 81 and serine 87 each carry phosphoserine. Disordered stretches follow at residues 187–240 (SQAP…TSPP) and 298–402 (EVLN…HRSY). Residue lysine 193 forms a Glycyl lysine isopeptide (Lys-Gly) (interchain with G-Cter in SUMO) linkage. The residue at position 213 (serine 213) is a Phosphoserine. A Phosphothreonine modification is found at threonine 218. 3 stretches are compositionally biased toward polar residues: residues 219 to 236 (QQNQ…SGRA), 312 to 327 (ASSS…SSKS), and 362 to 388 (PNSS…TLND). A Phosphoserine modification is found at serine 229. Residues 470 to 580 (VGSPDMDTPG…TEDFIQSAEI (111 aa)) form a self-association region. Positions 514–791 (LVTQAAYPAM…CIEGRSNVGK (278 aa)) are interaction with USP7. Residues 516-742 (TQAAYPAMVQ…FLSKIEPSKP (227 aa)) are RNA-binding. In terms of domain architecture, AXH spans 538–669 (SPTTASPTLP…SLTLKNLKNG (132 aa)). Residues lysine 585, lysine 672, and lysine 721 each participate in a glycyl lysine isopeptide (Lys-Gly) (interchain with G-Cter in SUMO) cross-link. Residues 736–774 (KIEPSKPTATRKRRWSAPETRKLEKSEDEPPLTLPKPSL) form a disordered region. A Phosphoserine modification is found at serine 751. The Nuclear localization signal signature appears at 770–773 (PKPS).

Belongs to the ATXN1 family. In terms of assembly, homooligomer. Interacts with PQBP1, UBQLN4 and USP7. Interacts with ANP32A. Interacts with CIC. Directly interacts with RBPJ; this interaction is disrupted in the presence of Notch intracellular domain. Interacts with ATXN1L; competes with ATXN1L for RBPJ-binding. Found in a complex with CIC and ATXN1L. Post-translationally, ubiquitinated by UBE3A, leading to its degradation by the proteasome. The presence of poly-Gln repeats in trangenic models developed to replicate phenotypes of the spinocerebellar ataxia 1 disease (SCA1) impair ubiquitination and degradation, leading to accumulation of Atxn1 in neurons and subsequent toxicity. In terms of processing, sumoylation is dependent on nuclear localization and phosphorylation at Ser-751. Expressed in the cortex and hypothalamus (at protein level). Widely expressed. In brain, the pattern of distribution is limited to neuron populations.

It localises to the cytoplasm. The protein resides in the nucleus. Functionally, chromatin-binding factor that repress Notch signaling in the absence of Notch intracellular domain by acting as a CBF1 corepressor. Binds to the HEY promoter and might assist, along with NCOR2, RBPJ-mediated repression. May be involved in RNA metabolism. In concert with CIC and ATXN1L, involved in brain development. The sequence is that of Ataxin-1 (Atxn1) from Mus musculus (Mouse).